The primary structure comprises 454 residues: MGAMLNLLLVVTVILCSILSPTRFMIMIDKMVADGYDPLDPFGKIIIKWDLLLSSPGQHHVQVTLENMQEYRHVEKPGWKLSWHWLNQEVIWDMKGAETTEQGNCSAFASSGNLPHCCLERPTIVDLLPGASLNVQVANCCRGGVLTSMSQDHANHVSAFHMTVGSSPDGPEEFNMPSNFDIGVPGYSCDNATSVSPTKFSTDKGRRKTQALATWEAVCVYSQFRSSPSPKCCVSLSAFYYQNIVPCPTCSCGCSSSHCVKDGELPPYLEQKHDPDEEVSPVVKCSDHMCPIRIHWHVKVNYREYWRVKITATNFNTMKNYTNWNLVVLHPNLKSVQQVFSFNYKSLTPYQNSINDTGMFWGVQFYNDVLLQEGKIGNVQTELLLKKDMGNFTFREGWAFPRRILFNGDECVMPSPDDFPRLPKSAHSSSSSSAVISSVSVVFCFLLHHLLLLV.

A signal peptide spans 1–24; that stretch reads MGAMLNLLLVVTVILCSILSPTRF. Residues Asn-104, Asn-191, Asn-320, Asn-355, and Asn-391 are each glycosylated (N-linked (GlcNAc...) asparagine). Ser-429 carries GPI-anchor amidated serine lipidation. Positions 430 to 454 are cleaved as a propeptide — removed in mature form; sequence SSSSAVISSVSVVFCFLLHHLLLLV.

Belongs to the COBRA family. In terms of tissue distribution, expressed in flowers and siliques.

It is found in the cell membrane. This is COBRA-like protein 6 (COBL6) from Arabidopsis thaliana (Mouse-ear cress).